Here is a 911-residue protein sequence, read N- to C-terminus: Inositol 1,4,5-triphosphate receptor associated 1 (911 aa).

The segment covering M1 to L11 has biased composition (basic and acidic residues). Disordered stretches follow at residues M1–V21, E39–L122, L174–L405, and E478–G498. The span at A68–P86 shows a compositional bias: polar residues. Residues H111–L122 show a composition bias toward basic residues. S118 bears the Phosphoserine mark. Residues S152–S184 are interaction with PRKG1. Polar residues predominate over residues S183–V212. Basic and acidic residues predominate over residues T277 to F292. S393 carries the phosphoserine modification. An interaction with ITPR1 region spans residues N534–T580. Residues S547 to T645 are a coiled coil. A phosphoserine mark is found at S683 and S696. Disordered regions lie at residues L706 to C766 and Y787 to R829. The span at L708 to S728 shows a compositional bias: low complexity. Basic and acidic residues predominate over residues G790 to R801. Acidic residues predominate over residues E802–E825. Residues V853–S873 form a helical membrane-spanning segment.

As to quaternary structure, interacts with PRKG1/cGKI-beta and ITPR1/IP3R type I. Part of cGMP kinase signaling complex at least composed of ACTA2/alpha-actin, CNN1/calponin H1, PLN/phospholamban, PRKG1 and ITPR1. Interacts with HCN4; regulates HCN4 channel activity. In terms of processing, phosphorylated by PRKG1/cGKI-beta. Phosphorylation at Ser-696 is necessary for PRKG1-induced calcium release in the cytosol. Highly expressed in trachea, aorta and uterus.

Its subcellular location is the sarcoplasmic reticulum. The protein localises to the cytoplasm. It localises to the perinuclear region. It is found in the membrane. Its function is as follows. Plays a role as NO/PRKG1-dependent regulator of IP3-induced calcium release; its phosphorylation by PRKG1 inhibits bradykinin and IP3-induced calcium release from intracellular stores. Recruits PRKG1 to the endoplasmic reticulum and may mediate the assembly of PRKG1 and ITPR1 in a macrocomplex. Involved in PRKG1 signaling cascade leading to inhibition of platelet activation and aggregation. Also mediates NO-dependent inhibition of calcium signaling in gastrointestinal smooth muscle contributing to NO-dependent relaxation. Plays a role in the regulation of cellular excitability by regulating the hyperpolarization-activated cyclic nucleotide-gated HCN4 channel activity. The polypeptide is Inositol 1,4,5-triphosphate receptor associated 1 (IRAG1) (Bos taurus (Bovine)).